The chain runs to 461 residues: Arginine biosynthesis bifunctional protein ArgJ, chloroplastic (461 aa).

6 residues coordinate substrate: Thr202, Lys228, Thr239, Glu326, Asn456, and Thr461. The active-site Nucleophile is the Thr239.

This sequence belongs to the ArgJ family. In terms of assembly, heterodimer of an alpha and a beta chain.

Its subcellular location is the plastid. It is found in the chloroplast. It carries out the reaction N(2)-acetyl-L-ornithine + L-glutamate = N-acetyl-L-glutamate + L-ornithine. The enzyme catalyses L-glutamate + acetyl-CoA = N-acetyl-L-glutamate + CoA + H(+). Its pathway is amino-acid biosynthesis; L-arginine biosynthesis; L-ornithine and N-acetyl-L-glutamate from L-glutamate and N(2)-acetyl-L-ornithine (cyclic): step 1/1. It functions in the pathway amino-acid biosynthesis; L-arginine biosynthesis; N(2)-acetyl-L-ornithine from L-glutamate: step 1/4. Catalyzes two activities which are involved in the cyclic version of arginine biosynthesis: the synthesis of acetylglutamate from glutamate and acetyl-CoA, and of ornithine by transacetylation between acetylornithine and glutamate. This Ostreococcus lucimarinus (strain CCE9901) protein is Arginine biosynthesis bifunctional protein ArgJ, chloroplastic.